Consider the following 388-residue polypeptide: 4-hydroxy-3-methylbut-2-en-1-yl diphosphate synthase (flavodoxin) (388 aa).

[4Fe-4S] cluster is bound by residues C281, C284, C316, and E323.

Belongs to the IspG family. [4Fe-4S] cluster is required as a cofactor.

The catalysed reaction is (2E)-4-hydroxy-3-methylbut-2-enyl diphosphate + oxidized [flavodoxin] + H2O + 2 H(+) = 2-C-methyl-D-erythritol 2,4-cyclic diphosphate + reduced [flavodoxin]. It participates in isoprenoid biosynthesis; isopentenyl diphosphate biosynthesis via DXP pathway; isopentenyl diphosphate from 1-deoxy-D-xylulose 5-phosphate: step 5/6. Functionally, converts 2C-methyl-D-erythritol 2,4-cyclodiphosphate (ME-2,4cPP) into 1-hydroxy-2-methyl-2-(E)-butenyl 4-diphosphate. This Pseudarthrobacter chlorophenolicus (strain ATCC 700700 / DSM 12829 / CIP 107037 / JCM 12360 / KCTC 9906 / NCIMB 13794 / A6) (Arthrobacter chlorophenolicus) protein is 4-hydroxy-3-methylbut-2-en-1-yl diphosphate synthase (flavodoxin).